The sequence spans 96 residues: Co-chaperonin GroES (96 aa).

It belongs to the GroES chaperonin family. In terms of assembly, heptamer of 7 subunits arranged in a ring. Interacts with the chaperonin GroEL.

It is found in the cytoplasm. Its function is as follows. Together with the chaperonin GroEL, plays an essential role in assisting protein folding. The GroEL-GroES system forms a nano-cage that allows encapsulation of the non-native substrate proteins and provides a physical environment optimized to promote and accelerate protein folding. GroES binds to the apical surface of the GroEL ring, thereby capping the opening of the GroEL channel. The chain is Co-chaperonin GroES from Coxiella burnetii (strain Dugway 5J108-111).